Reading from the N-terminus, the 339-residue chain is Dihydroorotate dehydrogenase (quinone) (339 aa).

FMN contacts are provided by residues 61–65 (AGLDK) and threonine 85. Residue lysine 65 coordinates substrate. 110-114 (NRMGF) is a substrate binding site. The FMN site is built by asparagine 138 and asparagine 171. Asparagine 171 is a substrate binding site. Serine 174 serves as the catalytic Nucleophile. Residue asparagine 176 participates in substrate binding. Residues lysine 216 and threonine 244 each coordinate FMN. 245 to 246 (NT) is a binding site for substrate. FMN contacts are provided by residues glycine 267, glycine 296, and 317-318 (YS).

This sequence belongs to the dihydroorotate dehydrogenase family. Type 2 subfamily. In terms of assembly, monomer. FMN serves as cofactor.

Its subcellular location is the cell membrane. It catalyses the reaction (S)-dihydroorotate + a quinone = orotate + a quinol. It participates in pyrimidine metabolism; UMP biosynthesis via de novo pathway; orotate from (S)-dihydroorotate (quinone route): step 1/1. Catalyzes the conversion of dihydroorotate to orotate with quinone as electron acceptor. The protein is Dihydroorotate dehydrogenase (quinone) of Pseudomonas fluorescens (strain ATCC BAA-477 / NRRL B-23932 / Pf-5).